A 199-amino-acid chain; its full sequence is WASH complex subunit 3 (199 aa).

The stretch at 47-76 (VCEEKLSALSLRIQQIETTLNILEAKLSSI) forms a coiled coil. The span at 93–120 (NISNGHLPSQPDAQSVVVSPQSDNNSMN) shows a compositional bias: polar residues. Disordered stretches follow at residues 93–136 (NISN…NITT) and 170–199 (PDLL…SFSD). The segment covering 183–192 (GEPEAEESSD) has biased composition (acidic residues).

It belongs to the CCDC53 family. As to quaternary structure, component of the WASH complex.

This Xenopus laevis (African clawed frog) protein is WASH complex subunit 3.